Reading from the N-terminus, the 359-residue chain is Peptide chain release factor 1 (359 aa).

An N5-methylglutamine modification is found at Gln235.

It belongs to the prokaryotic/mitochondrial release factor family. In terms of processing, methylated by PrmC. Methylation increases the termination efficiency of RF1.

It is found in the cytoplasm. Functionally, peptide chain release factor 1 directs the termination of translation in response to the peptide chain termination codons UAG and UAA. The sequence is that of Peptide chain release factor 1 from Polynucleobacter necessarius subsp. necessarius (strain STIR1).